Consider the following 289-residue polypeptide: Ribosome-inactivating protein alpha-trichosanthin (289 aa).

The first 23 residues, 1-23 (MIRFLVLSLLILTLFLTTPAVEG), serve as a signal peptide directing secretion. Glu-183 is a catalytic residue. Positions 271–289 (AMDDDVPMTQSFGCGSYAI) are cleaved as a propeptide — removed in mature form.

Belongs to the ribosome-inactivating protein family. Type 1 RIP subfamily.

The enzyme catalyses Endohydrolysis of the N-glycosidic bond at one specific adenosine on the 28S rRNA.. Functionally, inactivates eukaryotic 60S ribosomal subunits. The polypeptide is Ribosome-inactivating protein alpha-trichosanthin (Trichosanthes kirilowii (Chinese snake gourd)).